We begin with the raw amino-acid sequence, 258 residues long: SMH class II histocompatibility antigen, beta-1 chain (258 aa).

Positions 1-29 (MMVLPVPVAPWTAALTVLLMVLNKSVVQG) are cleaved as a signal peptide. The interval 30-121 (RTTPENYLFR…LNQRLSQSLI (92 aa)) is beta-1. The Extracellular portion of the chain corresponds to 30 to 225 (RTTPENYLFR…RAQSDSARNK (196 aa)). 2 disulfide bridges follow: cysteine 44–cysteine 106 and cysteine 144–cysteine 200. Residues 122 to 215 (AQPKVHVSPS…SLDRPITVEW (94 aa)) are beta-2. The region spanning 124–212 (PKVHVSPSKG…EHPSLDRPIT (89 aa)) is the Ig-like C1-type domain. Positions 216 to 225 (RAQSDSARNK) are connecting peptide. N-linked (GlcNAc...) asparagine glycosylation is present at asparagine 224. The helical transmembrane segment at 226-246 (TLTGVGGLVLGLIFLAVGLIM) threads the bilayer. Residues 247 to 258 (HVRSKKAQRGSR) are Cytoplasmic-facing.

This sequence belongs to the MHC class II family.

Its subcellular location is the membrane. In Spalax ehrenbergi (Middle East blind mole rat), this protein is SMH class II histocompatibility antigen, beta-1 chain.